We begin with the raw amino-acid sequence, 794 residues long: Protocadherin beta-6 (794 aa).

An N-terminal signal peptide occupies residues 1–27; sequence MMQTKVQNKKRQVAFFILLMLWGEVGS. Topologically, residues 28-688 are extracellular; the sequence is ESIQYSVLEE…AQADSLTVYL (661 aa). Cadherin domains follow at residues 34-132, 137-241, 246-345, 350-449, and 454-559; these read VLEE…APEF, MLLK…VPEF, YEAQ…APEL, FISL…APAF, and YTLF…SPFV. An N-linked (GlcNAc...) asparagine glycan is attached at N46. C95 and C101 form a disulfide bridge. N-linked (GlcNAc...) asparagine glycosylation is present at N183. N-linked (GlcNAc...) asparagine glycosylation is present at N416. The N-linked (GlcNAc...) asparagine glycan is linked to N565. The Cadherin 6 domain occupies 566 to 669; that stretch reads GSAPCTELVP…LVDGFSQPYL (104 aa). The helical transmembrane segment at 689-709 threads the bilayer; that stretch reads VVALASVSSLFLFSVLLFVAV. The Cytoplasmic portion of the chain corresponds to 710–794; it reads RLCRRSRAAS…PTSRNSFPFS (85 aa). Residues 773–794 are disordered; the sequence is PPQGTEREMEETPTSRNSFPFS. Polar residues predominate over residues 784–794; it reads TPTSRNSFPFS.

Forms homodimers in trans (molecules expressed by two different cells). Forms promiscuous heterodimers in cis (at the plasma membrane of the same cell) with other protocadherins.

It is found in the cell membrane. Its function is as follows. Calcium-dependent cell-adhesion protein involved in cells self-recognition and non-self discrimination. Thereby, it is involved in the establishment and maintenance of specific neuronal connections in the brain. This is Protocadherin beta-6 from Homo sapiens (Human).